Here is a 168-residue protein sequence, read N- to C-terminus: uncharacterized protein (168 aa).

A signal peptide spans 1-21 (MVYEVLAVVSGGLLGFGVTWA).

This is an uncharacterized protein from Archaeoglobus fulgidus (strain ATCC 49558 / DSM 4304 / JCM 9628 / NBRC 100126 / VC-16).